The following is a 259-amino-acid chain: NAD(P)H-quinone oxidoreductase subunit K 2 (259 aa).

Positions 52, 53, 117, and 148 each coordinate [4Fe-4S] cluster.

It belongs to the complex I 20 kDa subunit family. As to quaternary structure, NDH-1 can be composed of about 15 different subunits; different subcomplexes with different compositions have been identified which probably have different functions. Requires [4Fe-4S] cluster as cofactor.

Its subcellular location is the cellular thylakoid membrane. It carries out the reaction a plastoquinone + NADH + (n+1) H(+)(in) = a plastoquinol + NAD(+) + n H(+)(out). The catalysed reaction is a plastoquinone + NADPH + (n+1) H(+)(in) = a plastoquinol + NADP(+) + n H(+)(out). In terms of biological role, NDH-1 shuttles electrons from an unknown electron donor, via FMN and iron-sulfur (Fe-S) centers, to quinones in the respiratory and/or the photosynthetic chain. The immediate electron acceptor for the enzyme in this species is believed to be plastoquinone. Couples the redox reaction to proton translocation, and thus conserves the redox energy in a proton gradient. Cyanobacterial NDH-1 also plays a role in inorganic carbon-concentration. The protein is NAD(P)H-quinone oxidoreductase subunit K 2 (ndhK2) of Cyanothece sp. (strain PCC 7425 / ATCC 29141).